We begin with the raw amino-acid sequence, 427 residues long: 3-phosphoshikimate 1-carboxyvinyltransferase (427 aa).

Positions 22, 23, and 27 each coordinate 3-phosphoshikimate. Lys-22 serves as a coordination point for phosphoenolpyruvate. Phosphoenolpyruvate contacts are provided by Gly-96 and Arg-124. 3-phosphoshikimate is bound by residues Ser-169, Ser-170, Gln-171, Ser-197, Asp-313, Asn-336, and Lys-340. Gln-171 is a phosphoenolpyruvate binding site. Asp-313 (proton acceptor) is an active-site residue. Phosphoenolpyruvate is bound by residues Arg-344, Arg-386, and Lys-411.

It belongs to the EPSP synthase family. Monomer.

The protein localises to the cytoplasm. The catalysed reaction is 3-phosphoshikimate + phosphoenolpyruvate = 5-O-(1-carboxyvinyl)-3-phosphoshikimate + phosphate. It participates in metabolic intermediate biosynthesis; chorismate biosynthesis; chorismate from D-erythrose 4-phosphate and phosphoenolpyruvate: step 6/7. Catalyzes the transfer of the enolpyruvyl moiety of phosphoenolpyruvate (PEP) to the 5-hydroxyl of shikimate-3-phosphate (S3P) to produce enolpyruvyl shikimate-3-phosphate and inorganic phosphate. The polypeptide is 3-phosphoshikimate 1-carboxyvinyltransferase (Escherichia coli O17:K52:H18 (strain UMN026 / ExPEC)).